Here is a 967-residue protein sequence, read N- to C-terminus: Zinc finger protein with KRAB and SCAN domains 2 (967 aa).

Lysine 22 participates in a covalent cross-link: Glycyl lysine isopeptide (Lys-Gly) (interchain with G-Cter in SUMO2). An SCAN box domain is found at 45–127; it reads RKCFRQFCYE…ALVVHLEKET (83 aa). The interval 150 to 205 is disordered; it reads WEVADFQPEQVETQPRAVSREEPGSLHSGHQEQLNRKRERRPLPKNARPSPWVPAL. Over residues 167-185 the composition is skewed to basic and acidic residues; that stretch reads VSREEPGSLHSGHQEQLNR. The region spanning 229 to 300 is the KRAB domain; sequence VKDVHVARGF…GLHSSNKRSI (72 aa). Glycyl lysine isopeptide (Lys-Gly) (interchain with G-Cter in SUMO2) cross-links involve residues lysine 242, lysine 259, lysine 277, lysine 337, lysine 482, and lysine 529. A compositionally biased stretch (low complexity) spans 586 to 602; it reads RASAPSPSTPEEVPSPS. The segment at 586–626 is disordered; the sequence is RASAPSPSTPEEVPSPSRQERGGIEVEPQEPTGWEPEETSQ. Residues serine 591 and serine 600 each carry the phosphoserine modification. Residues lysine 734, lysine 745, and lysine 752 each participate in a glycyl lysine isopeptide (Lys-Gly) (interchain with G-Cter in SUMO2) cross-link. C2H2-type zinc fingers lie at residues 775–797, 803–825, 831–853, 859–881, 887–909, and 915–937; these read YKCG…QRIH, FKCL…QRIH, YRCG…QRTH, YQCG…RRVH, YKCV…RRIH, and YGCA…REVH. The segment at 941 to 967 is disordered; it reads KPLPHPPSLYCPENPHKGKTDEFRKTF. Over residues 954-967 the composition is skewed to basic and acidic residues; it reads NPHKGKTDEFRKTF.

It belongs to the krueppel C2H2-type zinc-finger protein family.

The protein resides in the nucleus. Its function is as follows. May be involved in transcriptional regulation. The polypeptide is Zinc finger protein with KRAB and SCAN domains 2 (ZKSCAN2) (Homo sapiens (Human)).